A 336-amino-acid polypeptide reads, in one-letter code: Galectin-12 (336 aa).

Galectin domains follow at residues Y49–L183 and C212–S336.

In terms of tissue distribution, not widely expressed. Predominantly expressed in adipose tissue.

It is found in the nucleus. Its function is as follows. Binds lactose. May participate in the apoptosis of adipocytes. The chain is Galectin-12 (LGALS12) from Homo sapiens (Human).